The chain runs to 355 residues: S-adenosylmethionine:tRNA ribosyltransferase-isomerase (355 aa).

The protein belongs to the QueA family. As to quaternary structure, monomer.

It is found in the cytoplasm. It catalyses the reaction 7-aminomethyl-7-carbaguanosine(34) in tRNA + S-adenosyl-L-methionine = epoxyqueuosine(34) in tRNA + adenine + L-methionine + 2 H(+). It functions in the pathway tRNA modification; tRNA-queuosine biosynthesis. In terms of biological role, transfers and isomerizes the ribose moiety from AdoMet to the 7-aminomethyl group of 7-deazaguanine (preQ1-tRNA) to give epoxyqueuosine (oQ-tRNA). The polypeptide is S-adenosylmethionine:tRNA ribosyltransferase-isomerase (Pectobacterium carotovorum subsp. carotovorum (strain PC1)).